Consider the following 257-residue polypeptide: Mitochondrial distribution and morphology protein 12 (257 aa).

The SMP-LTD domain occupies methionine 1–asparagine 256. The segment at tyrosine 74–glutamate 98 is disordered.

It belongs to the MDM12 family. In terms of assembly, component of the ER-mitochondria encounter structure (ERMES) or MDM complex, composed of MMM1, MDM10, MDM12 and MDM34. An MMM1 homodimer associates with one molecule of MDM12 on each side in a pairwise head-to-tail manner, and the SMP-LTD domains of MMM1 and MDM12 generate a continuous hydrophobic tunnel for phospholipid trafficking.

Its subcellular location is the mitochondrion outer membrane. It localises to the endoplasmic reticulum membrane. Component of the ERMES/MDM complex, which serves as a molecular tether to connect the endoplasmic reticulum (ER) and mitochondria. Components of this complex are involved in the control of mitochondrial shape and protein biogenesis, and function in nonvesicular lipid trafficking between the ER and mitochondria. MDM12 is required for the interaction of the ER-resident membrane protein MMM1 and the outer mitochondrial membrane-resident beta-barrel protein MDM10. The MDM12-MMM1 subcomplex functions in the major beta-barrel assembly pathway that is responsible for biogenesis of all mitochondrial outer membrane beta-barrel proteins, and acts in a late step after the SAM complex. The MDM10-MDM12-MMM1 subcomplex further acts in the TOM40-specific pathway after the action of the MDM12-MMM1 complex. Essential for establishing and maintaining the structure of mitochondria and maintenance of mtDNA nucleoids. The chain is Mitochondrial distribution and morphology protein 12 from Candida glabrata (strain ATCC 2001 / BCRC 20586 / JCM 3761 / NBRC 0622 / NRRL Y-65 / CBS 138) (Yeast).